Reading from the N-terminus, the 378-residue chain is UPF0754 membrane protein BcerKBAB4_0766 (378 aa).

Transmembrane regions (helical) follow at residues 1-21 (MNIWLNMLITTGLGAIIGGYT) and 357-377 (YLGALLGGTIGFIQGLLLLFL).

Belongs to the UPF0754 family.

The protein localises to the cell membrane. In Bacillus mycoides (strain KBAB4) (Bacillus weihenstephanensis), this protein is UPF0754 membrane protein BcerKBAB4_0766.